Consider the following 611-residue polypeptide: Mitochondrial import receptor subunit TOM70 (611 aa).

An N-acetylalanine modification is found at alanine 2. The Mitochondrial intermembrane segment spans residues alanine 2–arginine 41. Residues tryptophan 42–tryptophan 62 traverse the membrane as a helical segment. The Cytoplasmic portion of the chain corresponds to serine 63–leucine 611. The disordered stretch occupies residues arginine 69–glutamate 110. Arginine 74 carries the omega-N-methylarginine modification. 5 positions are modified to phosphoserine: serine 94, serine 99, serine 105, serine 108, and serine 113. TPR repeat units lie at residues alanine 117 to glutamate 150 and serine 156 to tyrosine 189. Lysine 188 carries the N6-acetyllysine modification. Residue lysine 278 forms a Glycyl lysine isopeptide (Lys-Gly) (interchain with G-Cter in SUMO2) linkage. TPR repeat units lie at residues glutamate 297–tyrosine 330, alanine 332–asparagine 365, alanine 370–asparagine 403, serine 404–phenylalanine 437, cysteine 445–cysteine 478, alanine 479–asparagine 512, threonine 514–cysteine 547, and aspartate 548–glutamate 581.

The protein belongs to the Tom70 family. In terms of assembly, forms part of the preprotein translocase complex of the outer mitochondrial membrane (TOM complex) which consists of at least 7 different proteins (TOMM5, TOMM6, TOMM7, TOMM20, TOMM22, TOMM40 and TOMM70). Interacts with CAPN8. Interacts with TRADD, TRAF6 and STING. Interacts with MAVS. Interacts with HSPA8 and HSP90AA1; both interactions are required for preprotein mitochondrial import. The interaction with HSP90AA1 is direct and mediates the association of TOMM70 with IRF3 and TBK1. Upon mitochondrial depolarization, interacts with PINK1; the interaction is required for PINK1-TOM-TIM23 supercomplex formation which is critical for PINK1 stabilization at the outer mitochondrial membrane, kinase activation and downstream mitophagy. Expressed in the base region of the oxyntic and pyloric mucosae.

The protein localises to the mitochondrion outer membrane. In terms of biological role, acts as a receptor of the preprotein translocase complex of the outer mitochondrial membrane (TOM complex). Recognizes and mediates the translocation of mitochondrial preproteins from the cytosol into the mitochondria in a chaperone dependent manner. Mediates TBK1 and IRF3 activation induced by MAVS in response to virus infection and promotes host antiviral responses during virus infection. This Mus musculus (Mouse) protein is Mitochondrial import receptor subunit TOM70.